The sequence spans 319 residues: Probable cell division protein WhiA (319 aa).

A DNA-binding region (H-T-H motif) is located at residues 278–311 (SLKELGQMLNPPVGKSGVNHRLRRLESLAEAFSR).

The protein belongs to the WhiA family.

Its function is as follows. Involved in cell division and chromosome segregation. This chain is Probable cell division protein WhiA, found in Heliobacterium modesticaldum (strain ATCC 51547 / Ice1).